The sequence spans 36 residues: Photosystem I reaction center subunit VIII (36 aa).

The chain crosses the membrane as a helical span at residues 10 to 30 (FVPLVGLVFSAIIMVLSFLYI).

This sequence belongs to the PsaI family.

Its subcellular location is the plastid. The protein resides in the chloroplast thylakoid membrane. Its function is as follows. May help in the organization of the PsaL subunit. The sequence is that of Photosystem I reaction center subunit VIII from Welwitschia mirabilis (Tree tumbo).